Consider the following 3779-residue polypeptide: METLSVLLRTFKRDNQSSIYKKNRQIKSQNKLQNKSQNNGNNNNNKDNNNINKDGSNYYQIFKDNRDSNNFDCKLSIDLNYIAFSISDNKKLIITSLYYNKNNIASTNSSPSSSLSSSSSSVFLFNSVLNNNNNNNNNNSNNNSYTYKQPYYYYHQQQQQHQYQQQQQQQHHFGSHHHHFFSHNSSFYKEYIDKDIQILRFYQQQQTSEDYKIEIEGISEVFQYSWMSPKVQKEPISLYNNSNNDNTTIPSNLVVLDNNQSSLHLLSIFKNLTTINPQDSQQSLQNSSSSIKISDIKLNKTLCIISPIVQQPQQQPQQQQQQQQQQQQQQQQQQQQQQQQQQPNQITIKTFKNYLLHHFILPYQKILEQLDLPQNTTSCIEILSSDDQGNLVLLVEKSVIALFKIKQIDSLNFIFFIQRRFNLSIGNSKKEYYQNITTIINNDNNNNKSSEEDKPIHLVKYIDKWLFIVNRLDGETSIWNINGKKRGIFQLKSLLNKDKIITSKFSEINEISISSDLMSIVYKCQNDQLYVLSLDYCFQNTITQQLSTIGLINYCHTNKIDDECDIFSPSSFISPIISGADQQEQQQQQQQLPTLIDPIDSEDSDDEELYSNAEDITNKNEIFQFHWFETTESSLKLQDNKKEFGQLAQWIPKKNSNSYALNGFTVYNNNNNLNALYNPNGNNSGNNSGRMSRENSFVFNNNKVLGKSQSIADDLYKEMNNNNEQLSSSSSPSILVKSNSNNNFQQVQQQLNDSLYSLIIPSLEDLDNDNKVLINTELFITPKLIVYQKDYRVTISSGINNNGDDEYDDDDDNDDNSQFKTEFYLYDRNKIDRRSIEIIQGRVLTVKLLDQSFYHLTENGINSILVDTNQQQILNNLIMLEGAESANHLCSLNQWNKRDLKVHALHLGLKYRQLDVVEPALASLDMDQQFIGSRLLINIILENSANAANSNVHNESFTNELLHIGMNFIGIIIKDRAQLVHQSLKKHNQNQTKMDLYNKDHEDEEEEGDGDNSNNSNSQDSDGDDDDDLKKILQKVNDIPIPEASITTTTTTTTENNHIEQQVKQIGNINWTETLTTPLNSSTFLDNHQQQSSASASLNQLLSIDDQKQQQPNTPIQDLLLFTKILEALRLFQKEKQDSTLPKRKQHGYYHQQQQQQQYHQQQQQQQQQTYNQLLITQMNDMGSWFPPGLIDRWERMEELEIIKESLNNGNISTLISYINWKREKKGLLYHQQQSSSSSQDSLSSHNDLTFPHLKFISGSGPFTFNDIQKISCCFVYQAISQDQLEVAIKLLKTIGTPIVPNLKQLAFHTSRRNIRNQILDLLLNHPMFKNNNDDDDDDGENNKFFTAQVLELIDFRSKLDKLYPNFSYHREFSRLSFKWRPLLESKPPLLIQQQQQLQQYYQLQNKQQQYQYPIKLFSFDLYSDDDIKIQSQEVDDLLPNTEHHYGFQLITHGNASLQQTNVYSSGFLRTSSPMVANNNNGGINNNGGDIGSGTGNSTPTGYRNRIILYPPPTNSIYNNNNNNNNNNNNTNSSSLLSNSINGNQLQHIPQTMDGYSHYTLNWLSKWSTDTKERILIDKKYKMEKRNIISKLFHSINHNQHQSVLDWVNQLSLKEIQSLRDLVLKRFIIVKNNHKTTTTTTKKIIVKRIKNSSKKETTVLEKETKETKDNNLENNNNNTNNSNNNNNNKEDIEDNKQEILLYNSIIESLKTSTQFVRDMFLNHLAKNRIFLLDVESSPWFYIENQYKSFSVDKNYLLMKRLAYNHLLFPEFNDDSISSSDGIKSLFKSHSYPLNKLLPIFTSTNHDENNGNNSNVENGGSGEDLRQQLDFHKFFIEFCIKNRLYLLLSSYLSSYRLANNWSERKLLDIELESNQFVSNDIQAQLLLLFKSRSKVDFIKSNILNLVSLLSDNINTNNNNNNSGNSDEKLKLQNQQKMKQQLQINLSSFDNSFNIQNQLDQFYNIINNVIEKYPNKPLIALASMIYSPINFKDLMSGITDQGIKLQSKQLLSKIKKQYPTTFKILEKLSNSSNNNNNNNDGSTTSTTTLNRSDSNNNLRQLIKPRDIITSKQDITLSELLESNSLFSLSHLFGSTDQDSQRLLIGDFRLQSFKEGYLDRIDVFYYLEKGRPLKAFNHLCKSLSKINNNNNNNNNNNNNNNNNNNNNNNNNNNNNNNNNNNNNNNSSIDIIDGDNGYEIKFSNKEQRNLIGWLIRTFTLKRINRKESVSSAIALMDLCKMYEYSTLIRTDVSVLQCILSNQSNITPHQYSPLLLSSSFNGENISTTANNNNNNNNNNNNNNNNNNNNNNNNNNNNNNNNNNNNNNEQQDTLNSYQIESIELFLSLYKTPESLLEIMTLSLGGKTSTSSSNTASVPYPGSPIQRIISRFENTISIDEPLVAVKTDDENNNNNNNNDNSSSSTPILKNNWYLLSKFCQCHHVAKLTRQLEHLASSGNWLEFIYQAQIQDFPLQQIKEIIYEKVNSIGIKSHLLLVLEQLSNDRKRQYINHHHQINNNNNNNEKEEEEEREEGINNSELLINSMNYYPIEESKLSNDIIGYLLSSYRSNNPRNYLLYNATKDKRPLLAVIANCIDRNQNDLSTIECLVTWLCVCTTNLSKFLSGNDNVTIDDSFDFDLDALNISLDHHVVPNIKKYNYQDLINSVQYIIQNRKSFILLQGFKIFLPNNILLNYLKFINQFHQYRFEDSEESLRLFINDLFDFKGGDGNNNNNNNNNQNNNNQNNNNNQNNNDSSIYFKSKDSVKKMVVEICENLLEMFSSYEREHFIGILHRSGISYTFSTLYSTLNLLKRTQMQDKSIHMDPKLIVQHLIEKGLFKDARTYSLENHLDKDLVTVAEVDALINHYQQGCLWEIEQERINLWKKCQQYFIQHQSKPDIAGELFYNRGNNIQPSREKVFLLSIAVEWFEKSYFENINTDNIVGSGSGNTTQLTPTKSSSITTTFIEDLKKQILLLSVGLSNQESNDRPFDDDGSYEDFSPSTSPARSITFPRGTNRGSGGFKSVNNNNNNNSNSDSIKNSSQNLLSYFTSPMASPSSSLSSSPIDHHDSPIKDYAQRNRKFQLISSSGTNSSFSTSPLQQPSFVSSIKDNKTTTTTTTTSVSSVISPIKSIQLEPKALDNVLSKLLNSNQLFEAEQIVQQFNYKSIDYDLISTMLKIVNRTISPNPNQFPQELINELSRDYNTSRWLKASQQSQFQSSSTFTGASGNGNGGNSGFEISVENILSTLENLSSCCTLAKQAAKAIINKFNVSEKLSMGYSELLISNPYDIINQLLLLGKDCFRLIKSYIFTNHLDIDKINDQLADLFSETIINQYNKSHQSTSSSGSTSPNMSILSLSLDDQPGRVGEGKSNGIDPNWTSEEFHEYIRIGRDPFTFGMKLIEATRINYESYFSVDNSPGIFGNTGMGSYVSPSLKQQSNTLNGTGGGGGNGGGNNGSGKLSSPIGMEAEVEMFVRAHFCFVIACSVDGTILVLNMVKSRVNYYADAGKYKLLVRLITGMQCYNELQSIFDILLQHNQFELLLRKKIHQHEDQNGLKLALHSYLMKKQPLYQDKLEMLFLRFNMYREIALNNEQKARSRLESLGKMVDNHYGGSGIGGNKSNSSLNSNSSKQELLSIMKDFLDAADNYSKERSQRTAQTCISMGALIALQIKSPEIPIINLRQNQAKHSMTIRPFFKESLIIANAYNLNAYSEWIDVLFYQVLANGNFNYLNDYISYFSHSNLFYSDLIKRYKADTTKSGKLQHVRNIIQNVIVDKNLKNELEKELTNYK.

12 disordered regions span residues 24–56, 1001–1028, 1137–1165, 1513–1538, 1656–1690, 2027–2054, 2144–2184, 2280–2325, 2508–2527, 2720–2748, 2975–3030, and 3427–3450; these read RQIKSQNKLQNKSQNNGNNNNNKDNNNINKDGS, HEDEEEEGDGDNSNNSNSQDSDGDDDDD, QDSTLPKRKQHGYYHQQQQQQQYHQQQQQ, PTNSIYNNNNNNNNNNNNTNSSSLLS, ETTVLEKETKETKDNNLENNNNNTNNSNNNNNNKE, SNSSNNNNNNNDGSTTSTTTLNRSDSNN, NNNN…NNSS, ISTT…NEQQ, QINNNNNNNEKEEEEEREEG, DGNNNNNNNNNQNNNNQNNNNNQNNNDSS, ESND…DSIK, and QSNTLNGTGGGGGNGGGNNGSGKL. Composition is skewed to low complexity over residues 26 to 56, 1011 to 1020, 1149 to 1165, and 1515 to 1538; these read IKSQNKLQNKSQNNGNNNNNKDNNNINKDGS, DNSNNSNSQD, YYHQQQQQQQYHQQQQQ, and NSIYNNNNNNNNNNNNTNSSSLLS. Positions 1656-1671 are enriched in basic and acidic residues; the sequence is ETTVLEKETKETKDNN. Positions 1672–1687 are enriched in low complexity; it reads LENNNNNTNNSNNNNN. Composition is skewed to low complexity over residues 2144 to 2182 and 2285 to 2322; these read NNNNNNNNNNNNNNNNNNNNNNNNNNNNNNNNNNNNNNN and NNNNNNNNNNNNNNNNNNNNNNNNNNNNNNNNNNNNNN. 2 stretches are compositionally biased toward low complexity: residues 2722–2745 and 3015–3030; these read NNNNNNNNNQNNNNQNNNNNQNNN and SVNNNNNNNSNSDSIK. The span at 3433 to 3446 shows a compositional bias: gly residues; sequence GTGGGGGNGGGNNG.

This chain is Protein DDB_G0268328, found in Dictyostelium discoideum (Social amoeba).